We begin with the raw amino-acid sequence, 503 residues long: Guanosine-5'-triphosphate,3'-diphosphate pyrophosphatase (503 aa).

Belongs to the GppA/Ppx family. GppA subfamily.

It catalyses the reaction guanosine 3'-diphosphate 5'-triphosphate + H2O = guanosine 3',5'-bis(diphosphate) + phosphate + H(+). The protein operates within purine metabolism; ppGpp biosynthesis; ppGpp from GTP: step 2/2. Functionally, catalyzes the conversion of pppGpp to ppGpp. Guanosine pentaphosphate (pppGpp) is a cytoplasmic signaling molecule which together with ppGpp controls the 'stringent response', an adaptive process that allows bacteria to respond to amino acid starvation, resulting in the coordinated regulation of numerous cellular activities. This Pseudoalteromonas atlantica (strain T6c / ATCC BAA-1087) protein is Guanosine-5'-triphosphate,3'-diphosphate pyrophosphatase.